We begin with the raw amino-acid sequence, 371 residues long: Queuine tRNA-ribosyltransferase (371 aa).

Asp-90 acts as the Proton acceptor in catalysis. Substrate contacts are provided by residues Asp-90–Phe-94, Asp-144, Gln-189, and Gly-215. The RNA binding stretch occupies residues Gly-246 to Asn-252. Asp-265 (nucleophile) is an active-site residue. Residues Thr-270–Arg-274 form an RNA binding; important for wobble base 34 recognition region. Residues Cys-303, Cys-305, Cys-308, and His-334 each coordinate Zn(2+).

It belongs to the queuine tRNA-ribosyltransferase family. Homodimer. Within each dimer, one monomer is responsible for RNA recognition and catalysis, while the other monomer binds to the replacement base PreQ1. Zn(2+) is required as a cofactor.

It catalyses the reaction 7-aminomethyl-7-carbaguanine + guanosine(34) in tRNA = 7-aminomethyl-7-carbaguanosine(34) in tRNA + guanine. It participates in tRNA modification; tRNA-queuosine biosynthesis. Catalyzes the base-exchange of a guanine (G) residue with the queuine precursor 7-aminomethyl-7-deazaguanine (PreQ1) at position 34 (anticodon wobble position) in tRNAs with GU(N) anticodons (tRNA-Asp, -Asn, -His and -Tyr). Catalysis occurs through a double-displacement mechanism. The nucleophile active site attacks the C1' of nucleotide 34 to detach the guanine base from the RNA, forming a covalent enzyme-RNA intermediate. The proton acceptor active site deprotonates the incoming PreQ1, allowing a nucleophilic attack on the C1' of the ribose to form the product. After dissociation, two additional enzymatic reactions on the tRNA convert PreQ1 to queuine (Q), resulting in the hypermodified nucleoside queuosine (7-(((4,5-cis-dihydroxy-2-cyclopenten-1-yl)amino)methyl)-7-deazaguanosine). The chain is Queuine tRNA-ribosyltransferase from Helicobacter pylori (strain Shi470).